The following is a 388-amino-acid chain: Succinyl-diaminopimelate desuccinylase (388 aa).

A Zn(2+)-binding site is contributed by His-75. Asp-77 is a catalytic residue. Asp-108 is a binding site for Zn(2+). The Proton acceptor role is filled by Glu-142. Residues Glu-143, Glu-171, and His-361 each coordinate Zn(2+).

This sequence belongs to the peptidase M20A family. DapE subfamily. In terms of assembly, homodimer. Requires Zn(2+) as cofactor. It depends on Co(2+) as a cofactor.

It carries out the reaction N-succinyl-(2S,6S)-2,6-diaminopimelate + H2O = (2S,6S)-2,6-diaminopimelate + succinate. It participates in amino-acid biosynthesis; L-lysine biosynthesis via DAP pathway; LL-2,6-diaminopimelate from (S)-tetrahydrodipicolinate (succinylase route): step 3/3. Its function is as follows. Catalyzes the hydrolysis of N-succinyl-L,L-diaminopimelic acid (SDAP), forming succinate and LL-2,6-diaminopimelate (DAP), an intermediate involved in the bacterial biosynthesis of lysine and meso-diaminopimelic acid, an essential component of bacterial cell walls. This Methylocella silvestris (strain DSM 15510 / CIP 108128 / LMG 27833 / NCIMB 13906 / BL2) protein is Succinyl-diaminopimelate desuccinylase.